The chain runs to 66 residues: Brevinin-1CDYd (66 aa).

A signal peptide spans 1-22; that stretch reads MFTLKKSLLILFFLGTINFSLC. Positions 23-44 are excised as a propeptide; the sequence is EEERNAEEERRDDPEERDVEVE. The cysteines at positions 60 and 66 are disulfide-linked.

The protein belongs to the frog skin active peptide (FSAP) family. Brevinin subfamily. In terms of tissue distribution, expressed by the skin glands.

It localises to the secreted. Its function is as follows. Antimicrobial peptide. The polypeptide is Brevinin-1CDYd (Rana dybowskii (Dybovsky's frog)).